The chain runs to 132 residues: Large ribosomal subunit protein bL17 (132 aa).

This sequence belongs to the bacterial ribosomal protein bL17 family. In terms of assembly, part of the 50S ribosomal subunit. Contacts protein L32.

The chain is Large ribosomal subunit protein bL17 from Variovorax paradoxus (strain S110).